Here is a 167-residue protein sequence, read N- to C-terminus: 3-isopropylmalate dehydratase small subunit (167 aa).

It belongs to the LeuD family. LeuD type 2 subfamily. As to quaternary structure, heterodimer of LeuC and LeuD.

The catalysed reaction is (2R,3S)-3-isopropylmalate = (2S)-2-isopropylmalate. Its pathway is amino-acid biosynthesis; L-leucine biosynthesis; L-leucine from 3-methyl-2-oxobutanoate: step 2/4. Its function is as follows. Catalyzes the isomerization between 2-isopropylmalate and 3-isopropylmalate, via the formation of 2-isopropylmaleate. This is 3-isopropylmalate dehydratase small subunit from Oleidesulfovibrio alaskensis (strain ATCC BAA-1058 / DSM 17464 / G20) (Desulfovibrio alaskensis).